The sequence spans 354 residues: Uroporphyrinogen decarboxylase (354 aa).

Substrate-binding positions include 27-31 (RRAGR), phenylalanine 46, aspartate 77, tyrosine 154, threonine 209, and histidine 327.

This sequence belongs to the uroporphyrinogen decarboxylase family. As to quaternary structure, homodimer.

It is found in the cytoplasm. The catalysed reaction is uroporphyrinogen III + 4 H(+) = coproporphyrinogen III + 4 CO2. It functions in the pathway porphyrin-containing compound metabolism; protoporphyrin-IX biosynthesis; coproporphyrinogen-III from 5-aminolevulinate: step 4/4. Its function is as follows. Catalyzes the decarboxylation of four acetate groups of uroporphyrinogen-III to yield coproporphyrinogen-III. This is Uroporphyrinogen decarboxylase from Salmonella typhimurium (strain LT2 / SGSC1412 / ATCC 700720).